A 443-amino-acid polypeptide reads, in one-letter code: Methyl-coenzyme M reductase I subunit beta (443 aa).

Y367 contacts coenzyme M. G369 lines the coenzyme B pocket.

This sequence belongs to the methyl-coenzyme M reductase beta subunit family. MCR is a hexamer of two alpha, two beta, and two gamma chains, forming a dimer of heterotrimers. The cofactor is coenzyme F430.

The protein resides in the cytoplasm. The catalysed reaction is coenzyme B + methyl-coenzyme M = methane + coenzyme M-coenzyme B heterodisulfide. It functions in the pathway one-carbon metabolism; methyl-coenzyme M reduction; methane from methyl-coenzyme M: step 1/1. In terms of biological role, component of the methyl-coenzyme M reductase (MCR) I that catalyzes the reductive cleavage of methyl-coenzyme M (CoM-S-CH3 or 2-(methylthio)ethanesulfonate) using coenzyme B (CoB or 7-mercaptoheptanoylthreonine phosphate) as reductant which results in the production of methane and the mixed heterodisulfide of CoB and CoM (CoM-S-S-CoB). This is the final step in methanogenesis. In Methanothermobacter thermautotrophicus (strain ATCC 29096 / DSM 1053 / JCM 10044 / NBRC 100330 / Delta H) (Methanobacterium thermoautotrophicum), this protein is Methyl-coenzyme M reductase I subunit beta (mcrB).